The chain runs to 247 residues: DNA polymerase sliding clamp (247 aa).

This sequence belongs to the PCNA family. Homotrimer. The subunits circularize to form a toroid; DNA passes through its center. Replication factor C (RFC) is required to load the toroid on the DNA.

Functionally, sliding clamp subunit that acts as a moving platform for DNA processing. Responsible for tethering the catalytic subunit of DNA polymerase and other proteins to DNA during high-speed replication. The polypeptide is DNA polymerase sliding clamp (Methanospirillum hungatei JF-1 (strain ATCC 27890 / DSM 864 / NBRC 100397 / JF-1)).